The primary structure comprises 398 residues: Enolase (398 aa).

Glutamine 154 contacts (2R)-2-phosphoglycerate. Catalysis depends on glutamate 196, which acts as the Proton donor. Residues aspartate 232, glutamate 273, and aspartate 300 each coordinate Mg(2+). Residues lysine 325, arginine 354, serine 355, and lysine 376 each coordinate (2R)-2-phosphoglycerate. Lysine 325 acts as the Proton acceptor in catalysis.

This sequence belongs to the enolase family. Mg(2+) serves as cofactor.

It localises to the cytoplasm. The protein resides in the secreted. The protein localises to the cell surface. It carries out the reaction (2R)-2-phosphoglycerate = phosphoenolpyruvate + H2O. It participates in carbohydrate degradation; glycolysis; pyruvate from D-glyceraldehyde 3-phosphate: step 4/5. In terms of biological role, catalyzes the reversible conversion of 2-phosphoglycerate (2-PG) into phosphoenolpyruvate (PEP). It is essential for the degradation of carbohydrates via glycolysis. The sequence is that of Enolase from Natronomonas pharaonis (strain ATCC 35678 / DSM 2160 / CIP 103997 / JCM 8858 / NBRC 14720 / NCIMB 2260 / Gabara) (Halobacterium pharaonis).